The sequence spans 68 residues: Copper transport protein ATOX1 (68 aa).

The 63-residue stretch at 1–63 folds into the HMA domain; sequence MPKHEFSVDM…TLNKTGKAVS (63 aa). Residues Cys-12 and Cys-15 each contribute to the Cu cation site. Ser-47 is subject to Phosphoserine. Position 60 is an N6-acetyllysine (Lys-60).

Belongs to the ATX1 family. In terms of assembly, homodimer. Interacts with ATP7B. Interacts with ATP7A. Interacts (via dimer form) with SLC31A1 (via C-terminal domain); this interaction improves ATOX1 stability and controls intracellular Cu(I) levels.

Functionally, binds and deliver cytosolic copper to the copper ATPase proteins. May be important in cellular antioxidant defense. The chain is Copper transport protein ATOX1 from Mus musculus (Mouse).